A 91-amino-acid chain; its full sequence is Ice-structuring protein 2A7 (91 aa).

An N-terminal signal peptide occupies residues Met1–Thr21. The propeptide at Glu22 to Asp39 is removed by a dipeptidylpeptidase.

Belongs to the type-I AFP family. As to expression, detected in blood serum (at protein level).

The protein resides in the secreted. Its function is as follows. Contributes to protect fish blood from freezing at subzero sea water temperatures. Lowers the blood freezing point. Binds to nascent ice crystals and prevents further growth. This Pseudopleuronectes americanus (Winter flounder) protein is Ice-structuring protein 2A7.